The chain runs to 306 residues: Low-density lipoprotein receptor class A domain-containing protein 4 (306 aa).

The Lumenal segment spans residues 1-64 (MPEAGFQATN…PPGIFNSELE (64 aa)). The 38-residue stretch at 11–48 (AFTECKFTCTSGKCLYLGSLVCNQQNDCGDNSDEENCL) folds into the LDL-receptor class A domain. 2 cysteine pairs are disulfide-bonded: Cys19/Cys38 and Cys32/Cys47. Residues 65 to 85 (FAQILIIVVVVTVMVVVVVCL) form a helical membrane-spanning segment. At 86-306 (LNHYKVSTRS…GKDRKPGDLV (221 aa)) the chain is on the cytoplasmic side. Residues 100–127 (PNQSQRQEDGLQPEGSLWPSDSSVQRPG) form a disordered region. A PPxY motif 1 motif is present at residues 180–183 (PPPY). The SMAD interaction motif (SIM) signature appears at 208-211 (PPNR). Positions 252–255 (PPTY) match the PPxY motif 2 motif. The disordered stretch occupies residues 268 to 306 (FHHQHSNTHRGSRPQFQPNNSEGTIVPIKGKDRKPGDLV). The segment covering 269-279 (HHQHSNTHRGS) has biased composition (basic residues). Over residues 281–290 (PQFQPNNSEG) the composition is skewed to polar residues. Positions 296–306 (KGKDRKPGDLV) are enriched in basic and acidic residues.

This sequence belongs to the PMEPA1 family. Interacts with PMEPA1. Interacts (via the SMAD interaction motif) with SMAD2 and SMAD3. In terms of tissue distribution, detected in all tissues tested.

The protein resides in the early endosome membrane. In terms of biological role, functions as a negative regulator of TGF-beta signaling and thereby probably plays a role in cell proliferation, differentiation, apoptosis, motility, extracellular matrix production and immunosuppression. In the canonical TGF-beta pathway, ZFYVE9/SARA recruits the intracellular signal transducer and transcriptional modulators SMAD2 and SMAD3 to the TGF-beta receptor. Phosphorylated by the receptor, SMAD2 and SMAD3 then form a heteromeric complex with SMAD4 that translocates to the nucleus to regulate transcription. Through interaction with SMAD2 and SMAD3, LDLRAD4 may compete with ZFYVE9 and SMAD4 and prevent propagation of the intracellular signal. The chain is Low-density lipoprotein receptor class A domain-containing protein 4 (Ldlrad4) from Mus musculus (Mouse).